Consider the following 94-residue polypeptide: Large ribosomal subunit protein bL27 (94 aa).

Residues 1-9 constitute a propeptide that is removed on maturation; that stretch reads MNLANLQLF. Positions 11-33 are disordered; sequence HKKGGGSTSNGRDSQAKRLGAKA.

The protein belongs to the bacterial ribosomal protein bL27 family. In terms of processing, the N-terminus is cleaved by ribosomal processing cysteine protease Prp.

The polypeptide is Large ribosomal subunit protein bL27 (Streptococcus agalactiae serotype V (strain ATCC BAA-611 / 2603 V/R)).